Here is a 348-residue protein sequence, read N- to C-terminus: Sulfate/thiosulfate import ATP-binding protein CysA (348 aa).

The region spanning 3–237 (IRIQELRKQF…PSSPFVYSFV (235 aa)) is the ABC transporter domain. 35 to 42 (GPSGSGKT) serves as a coordination point for ATP.

This sequence belongs to the ABC transporter superfamily. Sulfate/tungstate importer (TC 3.A.1.6) family. In terms of assembly, the complex is composed of two ATP-binding proteins (CysA), two transmembrane proteins (CysT and CysW) and a solute-binding protein (CysP).

It localises to the cell inner membrane. The catalysed reaction is sulfate(out) + ATP + H2O = sulfate(in) + ADP + phosphate + H(+). It catalyses the reaction thiosulfate(out) + ATP + H2O = thiosulfate(in) + ADP + phosphate + H(+). Functionally, part of the ABC transporter complex CysAWTP involved in sulfate/thiosulfate import. Responsible for energy coupling to the transport system. The protein is Sulfate/thiosulfate import ATP-binding protein CysA of Xylella fastidiosa (strain Temecula1 / ATCC 700964).